The following is a 360-amino-acid chain: Carbamoyl phosphate synthase small chain (360 aa).

Positions 1-169 are CPSase; sequence MTKRLLILED…TKTAYPAPGI (169 aa). 3 residues coordinate L-glutamine: Ser-46, Gly-220, and Gly-222. The Glutamine amidotransferase type-1 domain maps to 172–358; it reads NIVLVDFGLK…LEMIDSWRCT (187 aa). Cys-247 serves as the catalytic Nucleophile. The L-glutamine site is built by Met-248, Gln-251, Asn-289, Gly-291, and Tyr-292. Catalysis depends on residues His-331 and Asp-333.

This sequence belongs to the CarA family. In terms of assembly, composed of two chains; the small (or glutamine) chain promotes the hydrolysis of glutamine to ammonia, which is used by the large (or ammonia) chain to synthesize carbamoyl phosphate. Tetramer of heterodimers (alpha,beta)4.

The enzyme catalyses hydrogencarbonate + L-glutamine + 2 ATP + H2O = carbamoyl phosphate + L-glutamate + 2 ADP + phosphate + 2 H(+). It carries out the reaction L-glutamine + H2O = L-glutamate + NH4(+). Its pathway is amino-acid biosynthesis; L-arginine biosynthesis; carbamoyl phosphate from bicarbonate: step 1/1. It participates in pyrimidine metabolism; UMP biosynthesis via de novo pathway; (S)-dihydroorotate from bicarbonate: step 1/3. Its function is as follows. Small subunit of the glutamine-dependent carbamoyl phosphate synthetase (CPSase). CPSase catalyzes the formation of carbamoyl phosphate from the ammonia moiety of glutamine, carbonate, and phosphate donated by ATP, constituting the first step of 2 biosynthetic pathways, one leading to arginine and/or urea and the other to pyrimidine nucleotides. The small subunit (glutamine amidotransferase) binds and cleaves glutamine to supply the large subunit with the substrate ammonia. The sequence is that of Carbamoyl phosphate synthase small chain from Streptococcus pyogenes serotype M18 (strain MGAS8232).